The primary structure comprises 886 residues: Leucine--tRNA ligase (886 aa).

Residues 51–61 (PYPSGRIHMGH) carry the 'HIGH' region motif. The 'KMSKS' region signature appears at 644 to 648 (KMSKS). Position 647 (Lys647) interacts with ATP.

Belongs to the class-I aminoacyl-tRNA synthetase family.

It is found in the cytoplasm. The enzyme catalyses tRNA(Leu) + L-leucine + ATP = L-leucyl-tRNA(Leu) + AMP + diphosphate. The chain is Leucine--tRNA ligase from Bartonella tribocorum (strain CIP 105476 / IBS 506).